Consider the following 393-residue polypeptide: S-adenosylmethionine synthase 3 (393 aa).

Position 9 (Glu9) interacts with Mg(2+). Position 15 (His15) interacts with ATP. Glu43 contacts K(+). L-methionine contacts are provided by Glu56 and Gln99. ATP-binding positions include 167–169 (NGK), 235–238 (SGRF), Asp246, 252–253 (RK), Ala269, Lys273, and Lys277. L-methionine is bound at residue Asp246. Position 277 (Lys277) interacts with L-methionine.

It belongs to the AdoMet synthase family. In terms of assembly, homotetramer. Mn(2+) is required as a cofactor. The cofactor is Mg(2+). It depends on Co(2+) as a cofactor. K(+) serves as cofactor. Mostly expressed in flowers, seedpods and roots, and, to a lower extent, in stems and leaves.

It localises to the cytoplasm. The enzyme catalyses L-methionine + ATP + H2O = S-adenosyl-L-methionine + phosphate + diphosphate. The protein operates within amino-acid biosynthesis; S-adenosyl-L-methionine biosynthesis; S-adenosyl-L-methionine from L-methionine: step 1/1. Its function is as follows. Catalyzes the formation of S-adenosylmethionine from methionine and ATP. The reaction comprises two steps that are both catalyzed by the same enzyme: formation of S-adenosylmethionine (AdoMet) and triphosphate, and subsequent hydrolysis of the triphosphate. This chain is S-adenosylmethionine synthase 3 (MSAMS3), found in Brassica juncea (Indian mustard).